Consider the following 34-residue polypeptide: Cytochrome b6-f complex subunit 5 (34 aa).

Residues 5–25 traverse the membrane as a helical segment; that stretch reads LLSGIVLGLVPVTLAGLFVTA.

The protein belongs to the PetG family. The 4 large subunits of the cytochrome b6-f complex are cytochrome b6, subunit IV (17 kDa polypeptide, PetD), cytochrome f and the Rieske protein, while the 4 small subunits are PetG, PetL, PetM and PetN. The complex functions as a dimer.

It is found in the plastid. The protein resides in the chloroplast thylakoid membrane. Its function is as follows. Component of the cytochrome b6-f complex, which mediates electron transfer between photosystem II (PSII) and photosystem I (PSI), cyclic electron flow around PSI, and state transitions. PetG is required for either the stability or assembly of the cytochrome b6-f complex. In Oltmannsiellopsis viridis (Marine flagellate), this protein is Cytochrome b6-f complex subunit 5.